An 883-amino-acid polypeptide reads, in one-letter code: DNA mismatch repair protein MutS (883 aa).

The tract at residues 1 to 25 (MSDSVAPDVPVIREGKNPAQHRDRT) is disordered. Positions 11 to 25 (VIREGKNPAQHRDRT) are enriched in basic and acidic residues. 664–671 (GPNASGKS) serves as a coordination point for ATP. Positions 857–883 (RKGNTQPRARKSSAETEAKTQQFELPF) are disordered.

It belongs to the DNA mismatch repair MutS family.

In terms of biological role, this protein is involved in the repair of mismatches in DNA. It is possible that it carries out the mismatch recognition step. This protein has a weak ATPase activity. The sequence is that of DNA mismatch repair protein MutS from Acaryochloris marina (strain MBIC 11017).